A 126-amino-acid polypeptide reads, in one-letter code: Aspartate 1-decarboxylase (126 aa).

Catalysis depends on Ser-25, which acts as the Schiff-base intermediate with substrate; via pyruvic acid. Ser-25 carries the pyruvic acid (Ser) modification. Thr-57 contacts substrate. The active-site Proton donor is the Tyr-58. Position 73–75 (73–75) interacts with substrate; sequence GAA.

Belongs to the PanD family. In terms of assembly, heterooctamer of four alpha and four beta subunits. Pyruvate is required as a cofactor. Post-translationally, is synthesized initially as an inactive proenzyme, which is activated by self-cleavage at a specific serine bond to produce a beta-subunit with a hydroxyl group at its C-terminus and an alpha-subunit with a pyruvoyl group at its N-terminus.

The protein localises to the cytoplasm. The enzyme catalyses L-aspartate + H(+) = beta-alanine + CO2. The protein operates within cofactor biosynthesis; (R)-pantothenate biosynthesis; beta-alanine from L-aspartate: step 1/1. Its function is as follows. Catalyzes the pyruvoyl-dependent decarboxylation of aspartate to produce beta-alanine. The polypeptide is Aspartate 1-decarboxylase (Yersinia pestis bv. Antiqua (strain Antiqua)).